A 332-amino-acid chain; its full sequence is Phenol 2-monooxygenase, oxygenase component MhpL (332 aa).

This sequence belongs to the TmoE/XamoE family.

The enzyme catalyses phenol + NADH + O2 + H(+) = catechol + NAD(+) + H2O. It functions in the pathway aromatic compound metabolism; phenol degradation. Its function is as follows. Part of a multicomponent enzyme which catalyzes the degradation of phenol and some of its methylated derivatives. In Acinetobacter pittii (strain PHEA-2), this protein is Phenol 2-monooxygenase, oxygenase component MhpL (mphL).